The chain runs to 327 residues: ATP-dependent 6-phosphofructokinase (327 aa).

ATP is bound by residues Gly-11, 72–73 (RS), and 102–105 (GDGS). A Mg(2+)-binding site is contributed by Asp-103. Residue 127 to 129 (TID) coordinates substrate. The Proton acceptor role is filled by Asp-129. Arg-156 is a binding site for ADP. Residues Arg-164 and 171–173 (MGR) contribute to the substrate site. 187-189 (GAE) contributes to the ADP binding site. Residues Glu-224, Arg-245, and 251–254 (HIQR) each bind substrate.

Belongs to the phosphofructokinase type A (PFKA) family. ATP-dependent PFK group I subfamily. Prokaryotic clade 'B1' sub-subfamily. Homotetramer. Mg(2+) is required as a cofactor.

The protein localises to the cytoplasm. The catalysed reaction is beta-D-fructose 6-phosphate + ATP = beta-D-fructose 1,6-bisphosphate + ADP + H(+). Its pathway is carbohydrate degradation; glycolysis; D-glyceraldehyde 3-phosphate and glycerone phosphate from D-glucose: step 3/4. With respect to regulation, allosterically activated by ADP and other diphosphonucleosides, and allosterically inhibited by phosphoenolpyruvate. Its function is as follows. Catalyzes the phosphorylation of D-fructose 6-phosphate to fructose 1,6-bisphosphate by ATP, the first committing step of glycolysis. The sequence is that of ATP-dependent 6-phosphofructokinase from Sulfurovum sp. (strain NBC37-1).